A 968-amino-acid polypeptide reads, in one-letter code: RNA polymerase-associated protein RapA (968 aa).

Residues 164–334 (DVGRRHAPRV…FARLRLLDPN (171 aa)) enclose the Helicase ATP-binding domain. 177–184 (DEVGLGKT) lines the ATP pocket. Residues 280-283 (DEAH) carry the DEAH box motif. A Helicase C-terminal domain is found at 490 to 662 (RVEWLMGYLT…YLASPDQTEG (173 aa)).

It belongs to the SNF2/RAD54 helicase family. RapA subfamily. As to quaternary structure, interacts with the RNAP. Has a higher affinity for the core RNAP than for the holoenzyme. Its ATPase activity is stimulated by binding to RNAP.

Functionally, transcription regulator that activates transcription by stimulating RNA polymerase (RNAP) recycling in case of stress conditions such as supercoiled DNA or high salt concentrations. Probably acts by releasing the RNAP, when it is trapped or immobilized on tightly supercoiled DNA. Does not activate transcription on linear DNA. Probably not involved in DNA repair. This Shigella dysenteriae serotype 1 (strain Sd197) protein is RNA polymerase-associated protein RapA.